The primary structure comprises 106 residues: UPF0145 protein FTL_1249 (106 aa).

This sequence belongs to the UPF0145 family.

The polypeptide is UPF0145 protein FTL_1249 (Francisella tularensis subsp. holarctica (strain LVS)).